A 391-amino-acid polypeptide reads, in one-letter code: F-box/kelch-repeat protein At3g16740 (391 aa).

An F-box domain is found at 1–47 (MVQISDLPRDLTEEVLSRIPVTSMRAVRFTCKKWNTLSKDRSFTKKH). 2 Kelch repeats span residues 104 to 154 (KIFH…YEEK) and 163 to 215 (ILRF…LKGN).

Part of a SCF (ASK-cullin-F-box) protein ligase complex. Interacts with ASK11.

It is found in the nucleus. It functions in the pathway protein modification; protein ubiquitination. In terms of biological role, component of SCF(ASK-cullin-F-box) E3 ubiquitin ligase complexes, which may mediate the ubiquitination and subsequent proteasomal degradation of target proteins. In Arabidopsis thaliana (Mouse-ear cress), this protein is F-box/kelch-repeat protein At3g16740.